The sequence spans 454 residues: CCA-adding enzyme (454 aa).

ATP-binding residues include Ser-51 and Lys-54. Ser-51 and Lys-54 together coordinate CTP. Mg(2+)-binding residues include Asp-63, Asp-65, and Asp-118. ATP contacts are provided by His-141, Lys-161, and Tyr-170. His-141, Lys-161, and Tyr-170 together coordinate CTP.

It belongs to the tRNA nucleotidyltransferase/poly(A) polymerase family. Archaeal CCA-adding enzyme subfamily. As to quaternary structure, homodimer. Mg(2+) serves as cofactor.

It catalyses the reaction a tRNA precursor + 2 CTP + ATP = a tRNA with a 3' CCA end + 3 diphosphate. The catalysed reaction is a tRNA with a 3' CCA end + 2 CTP + ATP = a tRNA with a 3' CCACCA end + 3 diphosphate. In terms of biological role, catalyzes the addition and repair of the essential 3'-terminal CCA sequence in tRNAs without using a nucleic acid template. Adds these three nucleotides in the order of C, C, and A to the tRNA nucleotide-73, using CTP and ATP as substrates and producing inorganic pyrophosphate. tRNA 3'-terminal CCA addition is required both for tRNA processing and repair. Also involved in tRNA surveillance by mediating tandem CCA addition to generate a CCACCA at the 3' terminus of unstable tRNAs. While stable tRNAs receive only 3'-terminal CCA, unstable tRNAs are marked with CCACCA and rapidly degraded. This is CCA-adding enzyme from Methanothermobacter thermautotrophicus (strain ATCC 29096 / DSM 1053 / JCM 10044 / NBRC 100330 / Delta H) (Methanobacterium thermoautotrophicum).